Here is a 176-residue protein sequence, read N- to C-terminus: Ribosome maturation factor RimP (176 aa).

Belongs to the RimP family.

It is found in the cytoplasm. Required for maturation of 30S ribosomal subunits. The sequence is that of Ribosome maturation factor RimP from Chlorobium limicola (strain DSM 245 / NBRC 103803 / 6330).